The sequence spans 370 residues: GTPase Obg (370 aa).

The Obg domain maps to 1–159 (MKFIDEARIE…RMLRLELKVL (159 aa)). One can recognise an OBG-type G domain in the interval 160-334 (ADVGLLGMPN…LCYAIYDYLA (175 aa)). Residues 166 to 173 (GMPNAGKS), 191 to 195 (FTTLA), 213 to 216 (DIPG), 284 to 287 (NKLD), and 315 to 317 (SAL) each bind GTP. Ser-173 and Thr-193 together coordinate Mg(2+). The disordered stretch occupies residues 344–370 (EEEDLATDVRFRDAPPADGGATPGDDA).

This sequence belongs to the TRAFAC class OBG-HflX-like GTPase superfamily. OBG GTPase family. Monomer. It depends on Mg(2+) as a cofactor.

The protein resides in the cytoplasm. Its function is as follows. An essential GTPase which binds GTP, GDP and possibly (p)ppGpp with moderate affinity, with high nucleotide exchange rates and a fairly low GTP hydrolysis rate. Plays a role in control of the cell cycle, stress response, ribosome biogenesis and in those bacteria that undergo differentiation, in morphogenesis control. This is GTPase Obg from Burkholderia ambifaria (strain ATCC BAA-244 / DSM 16087 / CCUG 44356 / LMG 19182 / AMMD) (Burkholderia cepacia (strain AMMD)).